A 262-amino-acid polypeptide reads, in one-letter code: Ribosomal RNA small subunit methyltransferase A (262 aa).

S-adenosyl-L-methionine is bound by residues H13, L15, G40, E61, D85, and N103.

Belongs to the class I-like SAM-binding methyltransferase superfamily. rRNA adenine N(6)-methyltransferase family. RsmA subfamily.

The protein localises to the cytoplasm. It carries out the reaction adenosine(1518)/adenosine(1519) in 16S rRNA + 4 S-adenosyl-L-methionine = N(6)-dimethyladenosine(1518)/N(6)-dimethyladenosine(1519) in 16S rRNA + 4 S-adenosyl-L-homocysteine + 4 H(+). Its function is as follows. Specifically dimethylates two adjacent adenosines (A1518 and A1519) in the loop of a conserved hairpin near the 3'-end of 16S rRNA in the 30S particle. May play a critical role in biogenesis of 30S subunits. The sequence is that of Ribosomal RNA small subunit methyltransferase A from Bordetella avium (strain 197N).